A 289-amino-acid chain; its full sequence is RING-H2 finger protein ATL30 (289 aa).

A helical membrane pass occupies residues 26–46; sequence VIILTVILLVVFFIGFFAIYF. Residues 114–157 form an RING-type; atypical zinc finger; sequence CAICLLEFEEEHILLRLLTTCYHVFHQECIDQWLESNKTCPVCR. Positions 181–206 are disordered; it reads HENRDQEQTSTSNEVMLSRQSSGNNE. Over residues 188 to 204 the composition is skewed to polar residues; sequence QTSTSNEVMLSRQSSGN.

The protein belongs to the RING-type zinc finger family. ATL subfamily.

It localises to the membrane. It carries out the reaction S-ubiquitinyl-[E2 ubiquitin-conjugating enzyme]-L-cysteine + [acceptor protein]-L-lysine = [E2 ubiquitin-conjugating enzyme]-L-cysteine + N(6)-ubiquitinyl-[acceptor protein]-L-lysine.. It participates in protein modification; protein ubiquitination. This is RING-H2 finger protein ATL30 (ATL30) from Arabidopsis thaliana (Mouse-ear cress).